Consider the following 278-residue polypeptide: HTH-type transcriptional activator RhaS (278 aa).

The HTH araC/xylS-type domain maps to 174-272; it reads NLLLAWLEDH…NWSPRDIRQG (99 aa). 2 consecutive DNA-binding regions (H-T-H motif) follow at residues 191–212 and 239–262; these read DAVA…KQQT and VTDI…RREF.

Binds DNA as a dimer.

It localises to the cytoplasm. Activates expression of the rhaBAD and rhaT operons. In Escherichia coli O157:H7, this protein is HTH-type transcriptional activator RhaS.